The primary structure comprises 468 residues: 3-isopropylmalate dehydratase large subunit (468 aa).

Positions 347, 407, and 410 each coordinate [4Fe-4S] cluster.

Belongs to the aconitase/IPM isomerase family. LeuC type 1 subfamily. In terms of assembly, heterodimer of LeuC and LeuD. It depends on [4Fe-4S] cluster as a cofactor.

It carries out the reaction (2R,3S)-3-isopropylmalate = (2S)-2-isopropylmalate. The protein operates within amino-acid biosynthesis; L-leucine biosynthesis; L-leucine from 3-methyl-2-oxobutanoate: step 2/4. Catalyzes the isomerization between 2-isopropylmalate and 3-isopropylmalate, via the formation of 2-isopropylmaleate. The chain is 3-isopropylmalate dehydratase large subunit from Prochlorococcus marinus (strain AS9601).